Reading from the N-terminus, the 353-residue chain is UDP-N-acetylglucosamine--N-acetylmuramyl-(pentapeptide) pyrophosphoryl-undecaprenol N-acetylglucosamine transferase (353 aa).

UDP-N-acetyl-alpha-D-glucosamine-binding positions include 10–12, Asn-124, Ser-183, and Gln-283; that span reads TGG.

Belongs to the glycosyltransferase 28 family. MurG subfamily.

Its subcellular location is the cell inner membrane. It catalyses the reaction di-trans,octa-cis-undecaprenyl diphospho-N-acetyl-alpha-D-muramoyl-L-alanyl-D-glutamyl-meso-2,6-diaminopimeloyl-D-alanyl-D-alanine + UDP-N-acetyl-alpha-D-glucosamine = di-trans,octa-cis-undecaprenyl diphospho-[N-acetyl-alpha-D-glucosaminyl-(1-&gt;4)]-N-acetyl-alpha-D-muramoyl-L-alanyl-D-glutamyl-meso-2,6-diaminopimeloyl-D-alanyl-D-alanine + UDP + H(+). It functions in the pathway cell wall biogenesis; peptidoglycan biosynthesis. Functionally, cell wall formation. Catalyzes the transfer of a GlcNAc subunit on undecaprenyl-pyrophosphoryl-MurNAc-pentapeptide (lipid intermediate I) to form undecaprenyl-pyrophosphoryl-MurNAc-(pentapeptide)GlcNAc (lipid intermediate II). The polypeptide is UDP-N-acetylglucosamine--N-acetylmuramyl-(pentapeptide) pyrophosphoryl-undecaprenol N-acetylglucosamine transferase (Helicobacter pylori (strain P12)).